The chain runs to 1005 residues: DNA double-strand break repair Rad50 ATPase (1005 aa).

Residues K14, 35–40, 62–64, and Q134 each bind ATP; these read GSGKSS and ITK. 4 coiled-coil regions span residues 189–230, 292–321, 346–379, and 404–498; these read KENY…IEKL, LVDE…KQLE, LDTL…EIEK, and AVEY…LKEV. A Zinc-hook domain is found at 457-554; that stretch reads IEEKKKVLEN…DIEKLKKEID (98 aa). The Zn(2+) site is built by C502 and C505. Coiled coils occupy residues 523–600, 656–692, and 800–834; these read TQLN…YVIN, KEKC…ELIE, and RQEL…LKEM.

Belongs to the SMC family. RAD50 subfamily. In terms of assembly, homodimer. Forms a heterotetramer composed of two Mre11 subunits and two Rad50 subunits. Zn(2+) is required as a cofactor.

Its function is as follows. Part of the Rad50/Mre11 complex, which is involved in the early steps of DNA double-strand break (DSB) repair. The complex may facilitate opening of the processed DNA ends to aid in the recruitment of HerA and NurA. Rad50 controls the balance between DNA end bridging and DNA resection via ATP-dependent structural rearrangements of the Rad50/Mre11 complex. This chain is DNA double-strand break repair Rad50 ATPase, found in Methanocaldococcus jannaschii (strain ATCC 43067 / DSM 2661 / JAL-1 / JCM 10045 / NBRC 100440) (Methanococcus jannaschii).